The following is a 256-amino-acid chain: Acetyl-coenzyme A carboxylase carboxyl transferase subunit alpha (256 aa).

The region spanning 1–236 is the CoA carboxyltransferase C-terminal domain; it reads MTDVARILKE…KSHLIDEITQ (236 aa).

This sequence belongs to the AccA family. Acetyl-CoA carboxylase is a heterohexamer composed of biotin carboxyl carrier protein (AccB), biotin carboxylase (AccC) and two subunits each of ACCase subunit alpha (AccA) and ACCase subunit beta (AccD).

The protein localises to the cytoplasm. The catalysed reaction is N(6)-carboxybiotinyl-L-lysyl-[protein] + acetyl-CoA = N(6)-biotinyl-L-lysyl-[protein] + malonyl-CoA. The protein operates within lipid metabolism; malonyl-CoA biosynthesis; malonyl-CoA from acetyl-CoA: step 1/1. Its function is as follows. Component of the acetyl coenzyme A carboxylase (ACC) complex. First, biotin carboxylase catalyzes the carboxylation of biotin on its carrier protein (BCCP) and then the CO(2) group is transferred by the carboxyltransferase to acetyl-CoA to form malonyl-CoA. The protein is Acetyl-coenzyme A carboxylase carboxyl transferase subunit alpha of Streptococcus equi subsp. equi (strain 4047).